Consider the following 100-residue polypeptide: uncharacterized protein (100 aa).

An N-terminal signal peptide occupies residues 1–17 (MTMKYFCSVMIAIALVG). C18 is lipidated: N-palmitoyl cysteine. A lipid anchor (S-diacylglycerol cysteine) is attached at C18.

It localises to the cell membrane. This is an uncharacterized protein from Salmonella paratyphi A (strain ATCC 9150 / SARB42).